The following is a 100-amino-acid chain: Small ribosomal subunit protein uS14c (100 aa).

It belongs to the universal ribosomal protein uS14 family. In terms of assembly, part of the 30S ribosomal subunit.

It localises to the plastid. It is found in the chloroplast. Binds 16S rRNA, required for the assembly of 30S particles. This is Small ribosomal subunit protein uS14c from Fagopyrum esculentum subsp. ancestrale (Wild buckwheat).